The chain runs to 284 residues: Formamidopyrimidine-DNA glycosylase (284 aa).

Catalysis depends on proline 2, which acts as the Schiff-base intermediate with DNA. The Proton donor role is filled by glutamate 3. The Proton donor; for beta-elimination activity role is filled by lysine 60. DNA-binding residues include histidine 99, arginine 118, and arginine 163. The segment at 248 to 282 (WVYGRQGQPCRTCGQTIERIKLVGRSTHFCPQCQP) adopts an FPG-type zinc-finger fold. Arginine 272 (proton donor; for delta-elimination activity) is an active-site residue.

Belongs to the FPG family. In terms of assembly, monomer. Zn(2+) serves as cofactor.

The catalysed reaction is Hydrolysis of DNA containing ring-opened 7-methylguanine residues, releasing 2,6-diamino-4-hydroxy-5-(N-methyl)formamidopyrimidine.. The enzyme catalyses 2'-deoxyribonucleotide-(2'-deoxyribose 5'-phosphate)-2'-deoxyribonucleotide-DNA = a 3'-end 2'-deoxyribonucleotide-(2,3-dehydro-2,3-deoxyribose 5'-phosphate)-DNA + a 5'-end 5'-phospho-2'-deoxyribonucleoside-DNA + H(+). In terms of biological role, involved in base excision repair of DNA damaged by oxidation or by mutagenic agents. Acts as a DNA glycosylase that recognizes and removes damaged bases. Has a preference for oxidized purines, such as 7,8-dihydro-8-oxoguanine (8-oxoG). Has AP (apurinic/apyrimidinic) lyase activity and introduces nicks in the DNA strand. Cleaves the DNA backbone by beta-delta elimination to generate a single-strand break at the site of the removed base with both 3'- and 5'-phosphates. This is Formamidopyrimidine-DNA glycosylase from Acaryochloris marina (strain MBIC 11017).